A 1015-amino-acid polypeptide reads, in one-letter code: Tolloid-like protein 2 (1015 aa).

A signal peptide spans 1-25 (MPRATALGALVSLLLLLPLPRGAGG). 2 disordered regions span residues 24–49 (GGLGERPDATADYSELDGEEGTEQQL) and 88–130 (VGAT…TTLL). Positions 26–149 (LGERPDATAD…AKTFSPRVRR (124 aa)) are excised as a propeptide. Positions 103-113 (SESSPDTTAMD) are enriched in polar residues. A compositionally biased stretch (basic and acidic residues) spans 115-125 (GTKEAGKDGRE). One can recognise a Peptidase M12A domain in the interval 149 to 349 (RATTSRTERI…AQARKLYKCP (201 aa)). Asparagine 171 is a glycosylation site (N-linked (GlcNAc...) asparagine). 4 cysteine pairs are disulfide-bonded: cysteine 192/cysteine 348, cysteine 212/cysteine 234, cysteine 214/cysteine 215, and cysteine 351/cysteine 377. Residue histidine 242 participates in Zn(2+) binding. The active site involves glutamate 243. Residues histidine 246 and histidine 252 each coordinate Zn(2+). CUB domains follow at residues 351–463 (CGET…YEAT) and 464–576 (CGGD…FFKE). Residues asparagine 361 and asparagine 392 are each glycosylated (N-linked (GlcNAc...) asparagine). 12 cysteine pairs are disulfide-bonded: cysteine 404-cysteine 426, cysteine 464-cysteine 490, cysteine 517-cysteine 539, cysteine 580-cysteine 592, cysteine 588-cysteine 601, cysteine 603-cysteine 616, cysteine 620-cysteine 646, cysteine 673-cysteine 695, cysteine 736-cysteine 747, cysteine 743-cysteine 756, cysteine 758-cysteine 771, and cysteine 776-cysteine 802. The EGF-like 1; calcium-binding domain occupies 576–617 (EVDECSWPDHGGCEHRCVNTLGSYKCACDPGYELAADKKMCE). Residues 620–732 (CGGFITKLNG…RGFRAHFFSD (113 aa)) enclose the CUB 3 domain. Asparagine 628 carries N-linked (GlcNAc...) asparagine glycosylation. The region spanning 732–772 (DKDECAKDNGGCQHECVNTFGSYLCRCRNGYWLHENGHDCK) is the EGF-like 2; calcium-binding domain. 2 consecutive CUB domains span residues 776-888 (CAHK…HSTE) and 889-1005 (CGGR…YTST). A glycan (N-linked (GlcNAc...) asparagine) is linked at asparagine 805. Intrachain disulfides connect cysteine 829–cysteine 851, cysteine 889–cysteine 919, and cysteine 946–cysteine 968. Residues arginine 963 and arginine 966 each carry the omega-N-methylarginine modification.

Zn(2+) is required as a cofactor.

It localises to the secreted. In terms of biological role, protease which specifically processes pro-lysyl oxidase. Required for the embryonic development. Predominant protease, which in the development, influences dorsal-ventral patterning and skeletogenesis. In Homo sapiens (Human), this protein is Tolloid-like protein 2 (TLL2).